A 994-amino-acid polypeptide reads, in one-letter code: cGMP-dependent protein kinase (994 aa).

The interval 1-162 (MGACISKNSS…QDDSHTEEEK (162 aa)) is disordered. Gly2 carries the N-myristoyl glycine lipid modification. Residue Cys4 is the site of S-palmitoyl cysteine attachment. Composition is skewed to low complexity over residues 9-22 (SSAR…LSAS) and 33-46 (GAAG…GAAE). 2 stretches are compositionally biased toward basic and acidic residues: residues 65-80 (ELER…REEP) and 133-162 (EGPK…EEEK). CNMP-binding domain stretches follow at residues 189 to 305 (VCSS…FLAS), 308 to 407 (FFEM…RVLG), 463 to 539 (GIRF…ATLG), and 561 to 660 (IFRY…NEII). Positions 253, 254, 256, 263, and 264 each coordinate 3',5'-cyclic GMP. 3',5'-cyclic GMP is bound by residues Arg616, Gly625, Glu626, Ala628, Arg635, and Thr636. A Protein kinase domain is found at 684-941 (LQVVRVVGRG…YKDIKEHAFF (258 aa)). ATP-binding positions include 690–698 (VGRGTFGTV) and Lys713. Asp807 (proton acceptor) is an active-site residue. Positions 942 to 994 (GDFDWDKLAGRGLPPPLAPKGETYAEDTEQSSFELDEDDTIVLEDEYDWDKDF) constitute an AGC-kinase C-terminal domain. A disordered region spans residues 954–976 (LPPPLAPKGETYAEDTEQSSFEL). Residues 965-976 (YAEDTEQSSFEL) are compositionally biased toward acidic residues.

Belongs to the protein kinase superfamily. AGC Ser/Thr protein kinase family. cGMP subfamily. It depends on Mg(2+) as a cofactor.

The protein resides in the cytoplasm. It is found in the membrane. The protein localises to the cell membrane. The catalysed reaction is L-seryl-[protein] + ATP = O-phospho-L-seryl-[protein] + ADP + H(+). It catalyses the reaction L-threonyl-[protein] + ATP = O-phospho-L-threonyl-[protein] + ADP + H(+). With respect to regulation, activated by cGMP. The cGMP-binding domains acts cooperatively to activate PKG. Inhibited by the antiparasitic small molecule 4-[2-(4-fluorophenyl)-5-(1-methylpiperidine-4-yl)-1Hpyrrol- 3-yl]pyridine (compound 1). In terms of biological role, serine/threonine protein kinase which acts as a downstream effector of the second messenger cGMP. Plays an essential role in tachyzoite invasion of and egress from host cells. During invasion of host cells, regulates the apico-basal flux of F-actin probably via Ca(2+)-mediated activation of CDPK1. In tachyzoites, required for microneme secretion. Required for tachyzoite gliding motility. Its function is as follows. Plays an essential role in parasite invasion of and egress from host cells, and microneme secretion. Dispensable for parasite invasion of and egress from host cells, and microneme secretion. This Toxoplasma gondii protein is cGMP-dependent protein kinase.